Consider the following 129-residue polypeptide: Large ribosomal subunit protein bL20 (129 aa).

It belongs to the bacterial ribosomal protein bL20 family.

Binds directly to 23S ribosomal RNA and is necessary for the in vitro assembly process of the 50S ribosomal subunit. It is not involved in the protein synthesizing functions of that subunit. The chain is Large ribosomal subunit protein bL20 from Mycobacterium leprae (strain Br4923).